The primary structure comprises 108 residues: Ribulose bisphosphate carboxylase small subunit (108 aa).

The protein belongs to the RuBisCO small chain family. Heterohexadecamer of 8 large and 8 small subunits.

Its function is as follows. RuBisCO catalyzes two reactions: the carboxylation of D-ribulose 1,5-bisphosphate, the primary event in carbon dioxide fixation, as well as the oxidative fragmentation of the pentose substrate. Both reactions occur simultaneously and in competition at the same active site. Although the small subunit is not catalytic it is essential for maximal activity. The protein is Ribulose bisphosphate carboxylase small subunit of Nitrobacter vulgaris.